Here is a 271-residue protein sequence, read N- to C-terminus: uncharacterized protein (271 aa).

A signal peptide spans 1-18; it reads MKGFFLIAGFLLFARALC. The Lumenal portion of the chain corresponds to 19–187; it reads ASWNVEEGTL…FSPPPKRANY (169 aa). The helical transmembrane segment at 188–208 threads the bilayer; sequence FLSICFSVSVVVSLIGLLGVW. The Cytoplasmic portion of the chain corresponds to 209-230; the sequence is QKLLPKSNVYSVSSSSFARTFG. A helical membrane pass occupies residues 231–251; it reads FASLAVAEILLFIYWTSLSIF. The Lumenal segment spans residues 252 to 271; sequence QFGAYAAGVAIMCGIAAKSL.

The protein localises to the endoplasmic reticulum membrane. This is an uncharacterized protein from Schizosaccharomyces pombe (strain 972 / ATCC 24843) (Fission yeast).